The primary structure comprises 368 residues: V-type proton ATPase subunit C (368 aa).

The protein belongs to the V-ATPase C subunit family. As to quaternary structure, V-ATPase is a heteromultimeric enzyme composed of a peripheral catalytic V1 complex (components A to H) attached to an integral membrane V0 proton pore complex (components: a, c, c', c'' and d).

Functionally, subunit of the peripheral V1 complex of vacuolar ATPase. Subunit C is necessary for the assembly of the catalytic sector of the enzyme and is likely to have a specific function in its catalytic activity. V-ATPase is responsible for acidifying a variety of intracellular compartments in eukaryotic cells. The protein is V-type proton ATPase subunit C (vatC) of Dictyostelium discoideum (Social amoeba).